The chain runs to 387 residues: 3-ketoacyl-CoA thiolase (387 aa).

The active-site Acyl-thioester intermediate is C91. Residues H343 and C373 each act as proton acceptor in the active site.

The protein belongs to the thiolase-like superfamily. Thiolase family. In terms of assembly, heterotetramer of two alpha chains (FadB) and two beta chains (FadA).

It localises to the cytoplasm. The catalysed reaction is an acyl-CoA + acetyl-CoA = a 3-oxoacyl-CoA + CoA. The protein operates within lipid metabolism; fatty acid beta-oxidation. Catalyzes the final step of fatty acid oxidation in which acetyl-CoA is released and the CoA ester of a fatty acid two carbons shorter is formed. The chain is 3-ketoacyl-CoA thiolase from Cronobacter sakazakii (strain ATCC BAA-894) (Enterobacter sakazakii).